The sequence spans 180 residues: UPF0743 protein C215.06c (180 aa).

2 consecutive C2HC LYAR-type zinc fingers follow at residues 1-26 (MVSF…SRCH) and 27-51 (GAYF…TSCM). Residues cysteine 6, cysteine 9, histidine 21, cysteine 25, cysteine 32, cysteine 35, histidine 47, and cysteine 50 each contribute to the Zn(2+) site. The interval 61 to 125 (LYRPTKKELK…KETVSSPAEQ (65 aa)) is disordered. Positions 77 to 95 (NAVNSKELSPNTDNQNTPA) are enriched in polar residues. Serine 85 is subject to Phosphoserine. The segment covering 100–111 (HSLDENEKDKEN) has biased composition (basic and acidic residues).

It belongs to the UPF0743 family.

Its subcellular location is the nucleus. The protein is UPF0743 protein C215.06c of Schizosaccharomyces pombe (strain 972 / ATCC 24843) (Fission yeast).